The following is a 91-amino-acid chain: Large ribosomal subunit protein bL27 (91 aa).

It belongs to the bacterial ribosomal protein bL27 family.

The chain is Large ribosomal subunit protein bL27 from Pseudomonas savastanoi pv. phaseolicola (strain 1448A / Race 6) (Pseudomonas syringae pv. phaseolicola (strain 1448A / Race 6)).